Here is a 358-residue protein sequence, read N- to C-terminus: Hydroxyproline O-arabinosyltransferase 3 (358 aa).

Residues 8–28 form a helical; Signal-anchor membrane-spanning segment; it reads LLFLLGFGFFVVTYNLLTLIV.

In terms of tissue distribution, ubiquitous.

The protein resides in the golgi apparatus. Its subcellular location is the cis-Golgi network membrane. It carries out the reaction trans-4-hydroxy-L-prolyl-[protein] + UDP-beta-L-arabinofuranose = O-(beta-L-arabinofuranosyl)-trans-4-hydroxy-L-prolyl-[protein] + UDP + H(+). Its function is as follows. Glycosyltransferase involved in the O-arabinosylation of several proteins including extensins and small signaling peptides. Catalyzes the transfer of the initial L-arabinose to the hydroxyl group of Hyp residues. Contributes redundantly with HPAT1 and HPAT2 to arabinosylation of EXT3, but main contributor to arabinosylation of CLE peptides. The polypeptide is Hydroxyproline O-arabinosyltransferase 3 (Arabidopsis thaliana (Mouse-ear cress)).